The chain runs to 118 residues: Putative membrane protein insertion efficiency factor (118 aa).

It belongs to the UPF0161 family.

Its subcellular location is the cell inner membrane. Could be involved in insertion of integral membrane proteins into the membrane. The chain is Putative membrane protein insertion efficiency factor from Helicobacter pylori (strain HPAG1).